The following is a 408-amino-acid chain: Na(+)-translocating NADH-quinone reductase subunit F (408 aa).

Residues Ile-4–Phe-24 form a helical membrane-spanning segment. In terms of domain architecture, 2Fe-2S ferredoxin-type spans Gly-33 to Val-127. 4 residues coordinate [2Fe-2S] cluster: Cys-70, Cys-76, Cys-79, and Cys-111. Positions Ile-130 to Lys-270 constitute an FAD-binding FR-type domain.

This sequence belongs to the NqrF family. In terms of assembly, composed of six subunits; NqrA, NqrB, NqrC, NqrD, NqrE and NqrF. The cofactor is [2Fe-2S] cluster. It depends on FAD as a cofactor.

Its subcellular location is the cell inner membrane. The catalysed reaction is a ubiquinone + n Na(+)(in) + NADH + H(+) = a ubiquinol + n Na(+)(out) + NAD(+). Functionally, NQR complex catalyzes the reduction of ubiquinone-1 to ubiquinol by two successive reactions, coupled with the transport of Na(+) ions from the cytoplasm to the periplasm. The first step is catalyzed by NqrF, which accepts electrons from NADH and reduces ubiquinone-1 to ubisemiquinone by a one-electron transfer pathway. In Idiomarina loihiensis (strain ATCC BAA-735 / DSM 15497 / L2-TR), this protein is Na(+)-translocating NADH-quinone reductase subunit F.